The primary structure comprises 237 residues: Uridylate kinase (237 aa).

10-13 is an ATP binding site; that stretch reads KLSG. Glycine 51 contacts UMP. The ATP site is built by glycine 52 and arginine 56. Residues aspartate 71 and 133–140 contribute to the UMP site; that span reads TGNPCFTT. Residues threonine 160, tyrosine 166, and aspartate 169 each contribute to the ATP site.

The protein belongs to the UMP kinase family. Homohexamer.

It is found in the cytoplasm. The catalysed reaction is UMP + ATP = UDP + ADP. It functions in the pathway pyrimidine metabolism; CTP biosynthesis via de novo pathway; UDP from UMP (UMPK route): step 1/1. Its activity is regulated as follows. Inhibited by UTP. Catalyzes the reversible phosphorylation of UMP to UDP. This Vesicomyosocius okutanii subsp. Calyptogena okutanii (strain HA) protein is Uridylate kinase.